The following is a 485-amino-acid chain: Protein nucleotidyltransferase YdiU (485 aa).

ATP-binding residues include G85, G87, R88, K108, D120, G121, R171, and R178. The Proton acceptor role is filled by D249. Residues N250 and D259 each coordinate Mg(2+). D259 contacts ATP. Positions 462–485 (LPTTPNYQDPPADGDRSYQTFCGT) are disordered.

Belongs to the SELO family. Requires Mg(2+) as cofactor. It depends on Mn(2+) as a cofactor.

The catalysed reaction is L-seryl-[protein] + ATP = 3-O-(5'-adenylyl)-L-seryl-[protein] + diphosphate. The enzyme catalyses L-threonyl-[protein] + ATP = 3-O-(5'-adenylyl)-L-threonyl-[protein] + diphosphate. It carries out the reaction L-tyrosyl-[protein] + ATP = O-(5'-adenylyl)-L-tyrosyl-[protein] + diphosphate. It catalyses the reaction L-histidyl-[protein] + UTP = N(tele)-(5'-uridylyl)-L-histidyl-[protein] + diphosphate. The catalysed reaction is L-seryl-[protein] + UTP = O-(5'-uridylyl)-L-seryl-[protein] + diphosphate. The enzyme catalyses L-tyrosyl-[protein] + UTP = O-(5'-uridylyl)-L-tyrosyl-[protein] + diphosphate. Its function is as follows. Nucleotidyltransferase involved in the post-translational modification of proteins. It can catalyze the addition of adenosine monophosphate (AMP) or uridine monophosphate (UMP) to a protein, resulting in modifications known as AMPylation and UMPylation. This Teredinibacter turnerae (strain ATCC 39867 / T7901) protein is Protein nucleotidyltransferase YdiU.